A 671-amino-acid chain; its full sequence is NADH-quinone oxidoreductase subunit G (671 aa).

The region spanning 1–78 (MIKLNVDGSE…GMVIHTDTPM (78 aa)) is the 2Fe-2S ferredoxin-type domain. Residues cysteine 34, cysteine 45, cysteine 48, and cysteine 62 each contribute to the [2Fe-2S] cluster site. The 4Fe-4S His(Cys)3-ligated-type domain maps to 78–117 (MVKKAREGVMEFLLINHPLDCPICDQGGECNLQDQAFRYG). Histidine 94, cysteine 98, cysteine 101, cysteine 107, cysteine 146, cysteine 149, cysteine 152, and cysteine 196 together coordinate [4Fe-4S] cluster. Residues 215–271 (LKHTASIGVHDAEGSNIRIDSRGDEVMRILPRVNEEINEEWLSDKNRFSYDGLKYQR) enclose the 4Fe-4S Mo/W bis-MGD-type domain.

Belongs to the complex I 75 kDa subunit family. It depends on [2Fe-2S] cluster as a cofactor. [4Fe-4S] cluster serves as cofactor.

It catalyses the reaction a quinone + NADH + 5 H(+)(in) = a quinol + NAD(+) + 4 H(+)(out). Its function is as follows. NDH-1 shuttles electrons from NADH, via FMN and iron-sulfur (Fe-S) centers, to quinones in the respiratory chain. Couples the redox reaction to proton translocation (for every two electrons transferred, four hydrogen ions are translocated across the cytoplasmic membrane), and thus conserves the redox energy in a proton gradient. The sequence is that of NADH-quinone oxidoreductase subunit G (nuoG) from Rickettsia conorii (strain ATCC VR-613 / Malish 7).